The sequence spans 239 residues: Myogenic factor 6 (239 aa).

The interval 27–64 (QHLDMPGVSPLYDGNHSPLSPGPDNVPSETGGESSGDE) is disordered. Residues 96-147 (DRRKAATLRERRRLKKINEAFDALKRKSVANPNQRLPKVEILRSAISYIERL) form the bHLH domain. A disordered region spans residues 155–184 (DEQERGQSGASDTRNDKEQNRPSGGDYCWK).

As to quaternary structure, efficient DNA binding requires dimerization with another bHLH protein.

The protein resides in the nucleus. In terms of biological role, involved in muscle differentiation (myogenic factor). Induces fibroblasts to differentiate into myoblasts. Probable sequence specific DNA-binding protein. This Tetraodon nigroviridis (Spotted green pufferfish) protein is Myogenic factor 6 (myf6).